The primary structure comprises 909 residues: MPSLPNESDHQATCSLSLHSDLPYQPSSSIKRKVRKKKKNGAITANVVGTKYEIVRLVTEEMMFTKARDDDETANLIWNDCAVQHEKIAELRNYQRINHFPGMGEICRKDCLARNMTKMIKCQPHEYNFIPRTWIFPAEYTQFQTYIKELKKKRRQKTFIIKPANGAMGHGISLTRNGEKLQAQDHLIVQEYLEKPFLLESYKFDLRIYILVTSCDPLRIFLYNDGLVRMGTEKYHPPSESNLSQLYMHLTNYSVNKHNENFERDETENRGSKRSIKWFTEFLRANDYDISKFWNDISDLVVKTLIVAEPHVLHAYRMCRPGQHPTSESVCFEVLGFDIILDRKLKPWLLEINRAPSFGTDQKIDHDVKKGVLLNALKLLNIRASDKKKNLAKQKAEAQKRLYGQGSMKRLSPASSDWEKQRHTLERRKEELKERLAQVRKQISREEYENRHLGNYRRIYPPEDKLLLEKYEGLLATAFQTFLAGRAASLQREMNNPLKRMKEEDILDLLEQCELDDEKLSGKPTRPKEPRTLSSMPESTQTLKKLKNYSSHSSSNSTGSSSDTEEEEDEKEGKEKKVSYDLEEHKYKSLERSSRIHWKPPLKAARPFSNSSSPSSAASMRRSVSCPRSITALNTQSPTTDQRPFSSRISSTITRPLSGNRTNSLNRSSSSNRVPQSGTSGSVYPSISESRLDHLTKEQEEELTKQTLYALRDMRIRIPGKGVEEITHSHIDEIMDNWTYHKSKVASYWLIKLDSVKQRKVLDIVRTNIRSVLQRIWKVSDVECLHIYRSFNRVFNRLLWNHGQGLWSCFSNSGTSWETIFCKSTEVVTPQQFQCCQRLVQLCKDCLLAVYKYATDSRVAGMSPDWDDSRYLFPVVPQFTMKSSSSGVNCSSSRLPRSSILFNPRHNHY.

Residues 40–392 enclose the TTL domain; the sequence is NGAITANVVG…RASDKKKNLA (353 aa). ATP is bound by residues K162, 168-169, 190-193, and 203-205; these read MG, QEYL, and KFD. An L-glutamate-binding site is contributed by R229. 251-252 is an ATP binding site; it reads TN. Positions 253, 254, and 273 each coordinate L-glutamate. The Mg(2+) site is built by D338, E351, and N353. K369 provides a ligand contact to L-glutamate. Positions 390–452 are c-MTBD region; that stretch reads NLAKQKAEAQ…ISREEYENRH (63 aa). 2 disordered regions span residues 517-580 and 603-688; these read DEKL…KVSY and KAAR…PSIS. The span at 518-531 shows a compositional bias: basic and acidic residues; the sequence is EKLSGKPTRPKEPR. Polar residues predominate over residues 532-542; the sequence is TLSSMPESTQT. The segment covering 548–562 has biased composition (low complexity); that stretch reads NYSSHSSSNSTGSSS. Positions 571–580 are enriched in basic and acidic residues; it reads KEGKEKKVSY. A compositionally biased stretch (low complexity) spans 604-625; it reads AARPFSNSSSPSSAASMRRSVS. Positions 626–657 are enriched in polar residues; that stretch reads CPRSITALNTQSPTTDQRPFSSRISSTITRPL. Over residues 658-673 the composition is skewed to low complexity; sequence SGNRTNSLNRSSSSNR. Residues 674 to 688 are compositionally biased toward polar residues; sequence VPQSGTSGSVYPSIS.

It belongs to the tubulin--tyrosine ligase family. As to quaternary structure, interacts with both alpha- and beta-tubulin (via C-terminal tubulin tails). Requires Mg(2+) as cofactor.

The protein resides in the cell projection. It localises to the cilium. Its subcellular location is the cytoplasm. The protein localises to the cytoskeleton. It is found in the cilium basal body. The protein resides in the dendrite. It localises to the perikaryon. The enzyme catalyses L-glutamyl-[protein] + L-glutamate + ATP = gamma-L-glutamyl-L-glutamyl-[protein] + ADP + phosphate + H(+). It catalyses the reaction (L-glutamyl)(n)-gamma-L-glutamyl-L-glutamyl-[protein] + L-glutamate + ATP = (L-glutamyl)(n+1)-gamma-L-glutamyl-L-glutamyl-[protein] + ADP + phosphate + H(+). Polyglutamylase which modifies tubulin, generating polyglutamate side chains of variable lengths on the gamma-carboxyl group of specific glutamate residues within the C-terminal tail of tubulin. Mediates both ATP-dependent initiation and elongation steps of the polyglutamylation reaction. Preferentially modifies the beta-tubulin tail over an alpha-tail. Competes with monoglycylase TTLL3 for modification site on beta-tubulin substrate, thereby creating an anticorrelation between glycylation and glutamylation reactions. This is Tubulin polyglutamylase TTLL7 from Xenopus tropicalis (Western clawed frog).